The chain runs to 492 residues: Fascin-2 (492 aa).

This sequence belongs to the fascin family. Exclusively expressed in the eye, specifically in photoreceptor cells.

The protein resides in the cytoplasm. It is found in the cytoskeleton. The protein localises to the cell projection. Its subcellular location is the stereocilium. Acts as an actin bundling protein. May play a pivotal role in photoreceptor cell-specific events, such as disk morphogenesis. This Bos taurus (Bovine) protein is Fascin-2 (FSCN2).